Consider the following 84-residue polypeptide: Large ribosomal subunit protein bL27 (84 aa).

A disordered region spans residues 1-21 (MAHKKGVGSSRNGRDSDGQRL).

It belongs to the bacterial ribosomal protein bL27 family.

The protein is Large ribosomal subunit protein bL27 of Trichlorobacter lovleyi (strain ATCC BAA-1151 / DSM 17278 / SZ) (Geobacter lovleyi).